Consider the following 3855-residue polypeptide: Replicase polyprotein 1ab (3855 aa).

Residues 8 to 28 (CMCTPAARVFWNAGQVFCTRC) form a C4-type; atypical zinc finger. Positions 69 to 180 (ECTPSGCCWL…QPFCPFEEAH (112 aa)) constitute a Peptidase C31 domain. A PCP1-alpha region spans residues 69–182 (ECTPSGCCWL…FCPFEEAHSS (114 aa)). Residues cysteine 76 and histidine 146 each act as for nsp1-alpha papain-like cysteine proteinase activity in the active site. The tract at residues 203 to 204 (MM) is important for host EIF2AK2 inhibition. A PCP1-beta region spans residues 269-384 (PDVFDGKCWL…IFRFGAHKWY (116 aa)). Positions 269–385 (PDVFDGKCWL…FRFGAHKWYG (117 aa)) constitute a Peptidase C32 domain. Active-site for nsp1-beta papain-like cysteine proteinase activity residues include cysteine 276 and histidine 345. The OTU-like stretch occupies residues 418-505 (ITTYSPPTDG…GVHWEVEVRS (88 aa)). In terms of domain architecture, Peptidase C33 spans 420 to 527 (TYSPPTDGSC…VGVCSEGCVA (108 aa)). Catalysis depends on for nsp2 cysteine proteinase activity residues cysteine 429 and histidine 498. Disordered stretches follow at residues 752 to 797 (PSDP…DAGA) and 1047 to 1088 (PPPK…SRVS). Residues 775–790 (APASTTTLVREQTPDN) show a composition bias toward polar residues. Helical transmembrane passes span 1134–1154 (GSMA…LLLC), 1179–1199 (GVFG…SNPV), and 1252–1272 (WHVL…VYVV). The HD1 stretch occupies residues 1149-1272 (LALLLCRSYP…DLALSLVYVV (124 aa)). A WCCH region spans residues 1327–1351 (TGWRGCWRGESPIHQPHQKPIAYAN). Transmembrane regions (helical) follow at residues 1468 to 1488 (LAVA…LWFT), 1521 to 1541 (LCVS…QLSG), 1543 to 1563 (EVGI…RMAL), 1573 to 1593 (AFCA…PILL), and 1609 to 1629 (FLVF…GLLW). The interval 1468–1629 (LAVAQVSAWT…LSLGITGLLW (162 aa)) is HD2. In terms of domain architecture, Peptidase S32 spans 1694-1896 (GAFRTHKPCL…SLLASVPVVE (203 aa)). Residues histidine 1732, aspartate 1757, and serine 1810 each act as charge relay system; for serine protease nsp4 activity in the active site. 4 helical membrane passes run 1919–1939 (WTPI…AVLV), 1943–1963 (FSFA…VLMI), 1977–1997 (LAFY…TFAG), and 2020–2040 (SCVP…LWLF). Residues 1919-2040 (WTPIVAVGFF…HTLGVILWLF (122 aa)) are HD3. Residues 2381–2544 (IISQLQGLTT…LPYKLYPVRG (164 aa)) enclose the NiRAN domain. The region spanning 2783–2917 (GRCLEADLAS…YAERPTFPNY (135 aa)) is the RdRp catalytic domain. One can recognise an AV ZBD domain in the interval 3038–3101 (GKKFRHCGIC…SPVGAGRSPL (64 aa)). Cysteine 3044, cysteine 3047, cysteine 3057, cysteine 3062, histidine 3065, histidine 3067, histidine 3069, histidine 3071, cysteine 3078, histidine 3080, cysteine 3087, and cysteine 3090 together coordinate Zn(2+). One can recognise a (+)RNA virus helicase ATP-binding domain in the interval 3151–3310 (DLSDGDYQVV…VFDQMPQKQL (160 aa)). 3186–3193 (GPPGSGKT) contributes to the ATP binding site. A (+)RNA virus helicase C-terminal domain is found at 3311–3440 (TTIYRFGPNI…FSRGDELVVL (130 aa)). The AV-Nsp11N/CoV-Nsp15M domain occupies 3479–3576 (EGSCMPLPQV…LTLYIRGEPQ (98 aa)). The region spanning 3578-3700 (LPETLVSTGR…MVWKGATAYF (123 aa)) is the NendoU domain. Catalysis depends on residues histidine 3609, histidine 3624, and lysine 3653.

It belongs to the arteriviridae polyprotein family. Nsp1-alpha papain-like: Interacts with host RNF31. As to quaternary structure, interacts with host EIF2AK2; this interaction occurs in host stress granules and leads to EIF2AK2 inhibition. Interacts with host G3BP1; this interaction probably plays a role in Nsp1-beta-mediated inhibition of host EIF2AK2. In terms of assembly, interacts with host DDX18; this interaction redistributes host DDX18 to the cytoplasm. Interacts with host IFITM1. As to quaternary structure, interacts with host DDX5. In terms of assembly, interacts with host OTULIN. Interacts with host LGALS3. Specific enzymatic cleavages in vivo by its own proteases yield mature proteins. Nsp1 is autocleaved into two subunits, Nsp1-alpha and Nsp1-beta. There are two alternative pathways for processing. Either nsp4-5 is cleaved, which represents the major pathway or the nsp5-6 and nsp6-7 are processed, which represents the minor pathway. The major pathway occurs when nsp2 acts as a cofactor for nsp4.

Its subcellular location is the host nucleus. The protein resides in the host cytoplasm. It is found in the host membrane. The protein localises to the host endoplasmic reticulum. It localises to the host perinuclear region. The catalysed reaction is RNA(n) + a ribonucleoside 5'-triphosphate = RNA(n+1) + diphosphate. It carries out the reaction ATP + H2O = ADP + phosphate + H(+). The enzyme catalyses Thiol-dependent hydrolysis of ester, thioester, amide, peptide and isopeptide bonds formed by the C-terminal Gly of ubiquitin (a 76-residue protein attached to proteins as an intracellular targeting signal).. It catalyses the reaction uridylyl-uridylyl-ribonucleotide-RNA = a 3'-end uridylyl-2',3'-cyclophospho-uridine-RNA + a 5'-end dephospho-ribonucleoside-RNA. Functionally, contains the activities necessary for the transcription of negative stranded RNA, leader RNA, subgenomic mRNAs and progeny virion RNA as well as proteinases responsible for the cleavage of the polyprotein into functional products. In terms of biological role, inhibits host IFN-beta production. Plays a role in the degradation of the host transcriptional activator CREBBP protein. The degradation of host CREBBP which is a key component of the IFN enhanceosome is likely responsible for the inhibition of interferon mediated by Nsp1-alpha. Also participates in the inhibition of host NF-kappa-B activation by counteracting LUBAC-dependent induction of NF-kappa-B. Reduces host NEMO ubiquitination by blocking the interaction between the two LUBAC complex components RNF31 and SHARPIN. Plays a role in blocking host mRNA nuclear export to the cytoplasm and subversion of host protein synthesis. Additionally, inhibits the interferon-activated JAK/STAT signal transduction by mediating the ubiquitination and subsequent proteasomal degradation of host KPNA1. Repurposes the host antiviral stress granules into a proviral platform to counteract the EIF2AK2/PKR restriction, thereby regulating the host inflammatory response. Its function is as follows. Multifunctional protein that acts as a viral protease and as a viral antagonist of host immune response. Cleaves the nsp2/nsp3 site in the viral polyprotein. Displays deubiquitinating activity that cleaves both ubiquitinated and ISGylated products and therefore inhibits ubiquitin and ISG15-dependent host innate immunity. Also deubiquinates host NFKBIA, thereby interfering with NFKBIA degradation and impairing subsequent NF-kappa-B activation. Functionally, plays a role in the inhibition of the immune response by interacting with host IFITM1. This interaction leads to the proteasomal degradation of the IFN-induced antiviral protein IFITM1. In terms of biological role, cleaves the majority of cleavage sites present in the C-terminus of the polyprotein. Triggers host apoptosis through caspase-3, -8, and -9 activations. Subverts host innate immune responses through its protease activity. Targets the NF-kappa-B essential modulator NEMO and mediates its cleavage. Blocks host interferon beta induction and downstream signaling by cleaving mitochondrial MAVS, dislodging it from the mitochondria. Impairs host defense by cleaving host mRNA-decapping enzyme DCP1A to attenuate its antiviral activity. Plays a role in the initial induction of autophagosomes from host endoplasmic reticulum. Its function is as follows. Plays a role in the inhibition of host STAT3 signaling pathway by inducing the degradation of STAT3. Functionally, responsible for replication and transcription of the viral RNA genome. In terms of biological role, displays RNA and DNA duplex-unwinding activities with 5' to 3' polarity. Plays a role in viral transcription/replication and prevents the simultaneous activation of host cell dsRNA sensors, such as MDA5/IFIH1, OAS, PKR and NLRP3 inflammasome. Acts by degrading the 5'-polyuridines generated during replication of the poly(A) region of viral genomic and subgenomic RNAs. Catalyzes a two-step reaction in which a 2'3'-cyclic phosphate (2'3'-cP) is first generated by 2'-O transesterification, which is then hydrolyzed to a 3'-phosphate (3'-P). If not degraded, poly(U) RNA would hybridize with poly(A) RNA tails and activate host dsRNA sensors. Also plays a role in the inhibition of host type I interferon production by recruiting host OTULIN to promote removal of linear ubiquitination targeting host NEMO. The protein is Replicase polyprotein 1ab (rep) of Sus scrofa (Pig).